Here is a 450-residue protein sequence, read N- to C-terminus: ADP-specific phosphofructokinase (450 aa).

The ADPK domain occupies 1 to 449; the sequence is MIPEHLSIYT…FLTYLEFLKR (449 aa). The Mg(2+) site is built by E260, E290, and D433. D433 (proton acceptor) is an active-site residue.

Belongs to the carbohydrate kinase PfkC family. Requires Mg(2+) as cofactor.

Its subcellular location is the cytoplasm. It catalyses the reaction beta-D-fructose 6-phosphate + ADP = beta-D-fructose 1,6-bisphosphate + AMP + H(+). Its pathway is carbohydrate degradation; glycolysis. Its function is as follows. Catalyzes the phosphorylation of fructose 6-phosphate to fructose 1,6-bisphosphate using ADP as the phosphate donor. The polypeptide is ADP-specific phosphofructokinase (Pyrococcus horikoshii (strain ATCC 700860 / DSM 12428 / JCM 9974 / NBRC 100139 / OT-3)).